Here is a 211-residue protein sequence, read N- to C-terminus: Urease accessory protein UreG (211 aa).

A GTP-binding site is contributed by 11–18; it reads GPVGAGKT.

This sequence belongs to the SIMIBI class G3E GTPase family. UreG subfamily. Homodimer. UreD, UreF and UreG form a complex that acts as a GTP-hydrolysis-dependent molecular chaperone, activating the urease apoprotein by helping to assemble the nickel containing metallocenter of UreC. The UreE protein probably delivers the nickel.

Its subcellular location is the cytoplasm. Its function is as follows. Facilitates the functional incorporation of the urease nickel metallocenter. This process requires GTP hydrolysis, probably effectuated by UreG. The sequence is that of Urease accessory protein UreG from Actinobacillus pleuropneumoniae serotype 7 (strain AP76).